The chain runs to 431 residues: Ribonuclease TTHA0252 (431 aa).

His59, His61, Asp63, His64, His141, Asp162, and His400 together coordinate Zn(2+).

Belongs to the metallo-beta-lactamase superfamily. RNA-metabolizing metallo-beta-lactamase-like family. Monomer. It depends on Zn(2+) as a cofactor.

The protein resides in the cytoplasm. Inhibited by cadmium, cobalt, manganese, magnesium, calcium and nickel ions. Has endoribonuclease activity towards 23S and 16S rRNA (in vitro). The protein is Ribonuclease TTHA0252 of Thermus thermophilus (strain ATCC 27634 / DSM 579 / HB8).